A 456-amino-acid polypeptide reads, in one-letter code: Shufflon protein D' (456 aa).

The tract at residues 1-361 (MKKYDRGWAS…TGAILSCQSG (361 aa)) is constant region. The interval 362–456 (TWRKSNSGST…KCSYVVACQN (95 aa)) is variable region.

The polypeptide is Shufflon protein D' (Escherichia coli).